Consider the following 133-residue polypeptide: MSMGSFGFALAVMVLAVLVASAAGAPNTNFVSSACNTKKIPSGNPFFNNLGALLVNLEKNTAFSGYDYKASRAGSGGAPTAYGRGVCKQSISQSDCTACLTNLGGRIWGICKNAIGARVQLTDCFIRYEQYSI.

Residues 1-24 form the signal peptide; sequence MSMGSFGFALAVMVLAVLVASAAG. In terms of domain architecture, Gnk2-homologous spans 28 to 133; the sequence is TNFVSSACNT…CFIRYEQYSI (106 aa). 3 disulfide bridges follow: cysteine 35-cysteine 111, cysteine 87-cysteine 96, and cysteine 99-cysteine 124. Asparagine 36 serves as a coordination point for alpha-D-mannopyranose. Alpha-D-mannopyranose contacts are provided by arginine 118 and glutamate 129.

Exerts antifungal activity through its carbohydrate-binding specificity. The protein is Antifungal protein ginkbilobin-like protein 1 of Picea sitchensis (Sitka spruce).